Consider the following 82-residue polypeptide: RNA-binding protein Hfq (82 aa).

Positions 10 to 70 (DTFLNHVRKN…ISTIMPAQPV (61 aa)) constitute a Sm domain.

It belongs to the Hfq family. Homohexamer.

RNA chaperone that binds small regulatory RNA (sRNAs) and mRNAs to facilitate mRNA translational regulation in response to envelope stress, environmental stress and changes in metabolite concentrations. Also binds with high specificity to tRNAs. The chain is RNA-binding protein Hfq from Parvibaculum lavamentivorans (strain DS-1 / DSM 13023 / NCIMB 13966).